The chain runs to 243 residues: MLTFLIPTAKEMMIPKESHPHLLPQDSQAILKIMAAMTTEDLAKSYRIKEEAAKKEQQRWQDMASQQSLAYPAYQLFNGLMYRHIKRDKLTTQEQAYLTQQVYITSSFYGIIPANHPIAEHRHDFHTRIKIEGQSLKSYWRPCYNQFAKEHPQVISLLSSEFDDVFSKDCKQLWISPKFMAEKEGQFKTHSTISKKARGAFLTACMENNCQTVDSLKSLVFAGFYYHPDLSTDHEFVYIKKEA.

This sequence belongs to the UPF0246 family.

This is UPF0246 protein Spy49_1742 from Streptococcus pyogenes serotype M49 (strain NZ131).